The primary structure comprises 300 residues: 4-hydroxy-tetrahydrodipicolinate synthase (300 aa).

Threonine 56 contacts pyruvate. The Proton donor/acceptor role is filled by tyrosine 145. The Schiff-base intermediate with substrate role is filled by lysine 173. Position 215 (valine 215) interacts with pyruvate.

Belongs to the DapA family. As to quaternary structure, homotetramer; dimer of dimers.

Its subcellular location is the cytoplasm. It carries out the reaction L-aspartate 4-semialdehyde + pyruvate = (2S,4S)-4-hydroxy-2,3,4,5-tetrahydrodipicolinate + H2O + H(+). The protein operates within amino-acid biosynthesis; L-lysine biosynthesis via DAP pathway; (S)-tetrahydrodipicolinate from L-aspartate: step 3/4. In terms of biological role, catalyzes the condensation of (S)-aspartate-beta-semialdehyde [(S)-ASA] and pyruvate to 4-hydroxy-tetrahydrodipicolinate (HTPA). This is 4-hydroxy-tetrahydrodipicolinate synthase from Prochlorococcus marinus (strain AS9601).